The following is a 535-amino-acid chain: CTP synthase (535 aa).

An amidoligase domain region spans residues M1 to L268. S14 lines the CTP pocket. S14 is a UTP binding site. Residue S15 to I20 coordinates ATP. Position 55 (Y55) interacts with L-glutamine. Position 72 (D72) interacts with ATP. Mg(2+) contacts are provided by D72 and E142. CTP contacts are provided by residues D149–E151, K189–Q194, and K225. UTP-binding positions include K189–Q194 and K225. Positions K293 to K535 constitute a Glutamine amidotransferase type-1 domain. Position 355 (G355) interacts with L-glutamine. Catalysis depends on C382, which acts as the Nucleophile; for glutamine hydrolysis. Residues L383–Q386, E406, and R464 contribute to the L-glutamine site. Residues H509 and E511 contribute to the active site.

The protein belongs to the CTP synthase family. In terms of assembly, homotetramer.

The enzyme catalyses UTP + L-glutamine + ATP + H2O = CTP + L-glutamate + ADP + phosphate + 2 H(+). The catalysed reaction is L-glutamine + H2O = L-glutamate + NH4(+). It catalyses the reaction UTP + NH4(+) + ATP = CTP + ADP + phosphate + 2 H(+). The protein operates within pyrimidine metabolism; CTP biosynthesis via de novo pathway; CTP from UDP: step 2/2. Its activity is regulated as follows. Allosterically activated by GTP, when glutamine is the substrate; GTP has no effect on the reaction when ammonia is the substrate. The allosteric effector GTP functions by stabilizing the protein conformation that binds the tetrahedral intermediate(s) formed during glutamine hydrolysis. Inhibited by the product CTP, via allosteric rather than competitive inhibition. In terms of biological role, catalyzes the ATP-dependent amination of UTP to CTP with either L-glutamine or ammonia as the source of nitrogen. Regulates intracellular CTP levels through interactions with the four ribonucleotide triphosphates. The polypeptide is CTP synthase (Lactococcus lactis subsp. lactis (strain IL1403) (Streptococcus lactis)).